The sequence spans 300 residues: Ribonuclease HIII (300 aa).

An RNase H type-2 domain is found at 83 to 300; that stretch reads IPIIGSDEVG…THKAQALLTK (218 aa). Residues Asp-89, Glu-90, and Asp-194 each coordinate a divalent metal cation.

This sequence belongs to the RNase HII family. RnhC subfamily. Requires Mn(2+) as cofactor. The cofactor is Mg(2+).

It is found in the cytoplasm. It carries out the reaction Endonucleolytic cleavage to 5'-phosphomonoester.. In terms of biological role, endonuclease that specifically degrades the RNA of RNA-DNA hybrids. This Streptococcus pyogenes serotype M5 (strain Manfredo) protein is Ribonuclease HIII.